Here is a 172-residue protein sequence, read N- to C-terminus: Shikimate kinase (172 aa).

11 to 16 (GSGKTT) is a binding site for ATP. Thr-15 is a binding site for Mg(2+). Substrate contacts are provided by Asp-33, Arg-57, and Gly-79. Arg-117 lines the ATP pocket. Arg-136 is a binding site for substrate.

Belongs to the shikimate kinase family. In terms of assembly, monomer. The cofactor is Mg(2+).

It is found in the cytoplasm. It catalyses the reaction shikimate + ATP = 3-phosphoshikimate + ADP + H(+). It participates in metabolic intermediate biosynthesis; chorismate biosynthesis; chorismate from D-erythrose 4-phosphate and phosphoenolpyruvate: step 5/7. Its function is as follows. Catalyzes the specific phosphorylation of the 3-hydroxyl group of shikimic acid using ATP as a cosubstrate. This Caldicellulosiruptor bescii (strain ATCC BAA-1888 / DSM 6725 / KCTC 15123 / Z-1320) (Anaerocellum thermophilum) protein is Shikimate kinase.